Here is an 874-residue protein sequence, read N- to C-terminus: Probable inorganic carbon transporter subunit DabA (874 aa).

4 residues coordinate Zn(2+): C398, D400, H580, and C595.

The protein belongs to the inorganic carbon transporter (TC 9.A.2) DabA family. In terms of assembly, forms a complex with DabB. It depends on Zn(2+) as a cofactor.

Its subcellular location is the cell membrane. In terms of biological role, part of an energy-coupled inorganic carbon pump. The protein is Probable inorganic carbon transporter subunit DabA of Bacillus cereus (strain 03BB102).